The chain runs to 308 residues: Elongation factor Ts (308 aa).

The interval 80-83 is involved in Mg(2+) ion dislocation from EF-Tu; the sequence is TDFV.

Belongs to the EF-Ts family.

Its subcellular location is the cytoplasm. Functionally, associates with the EF-Tu.GDP complex and induces the exchange of GDP to GTP. It remains bound to the aminoacyl-tRNA.EF-Tu.GTP complex up to the GTP hydrolysis stage on the ribosome. The sequence is that of Elongation factor Ts from Rhizobium etli (strain CIAT 652).